We begin with the raw amino-acid sequence, 140 residues long: Transcription antitermination protein NusB (140 aa).

This sequence belongs to the NusB family.

In terms of biological role, involved in transcription antitermination. Required for transcription of ribosomal RNA (rRNA) genes. Binds specifically to the boxA antiterminator sequence of the ribosomal RNA (rrn) operons. In Elusimicrobium minutum (strain Pei191), this protein is Transcription antitermination protein NusB.